Consider the following 360-residue polypeptide: Chorismate synthase (360 aa).

Arg47 serves as a coordination point for NADP(+). FMN contacts are provided by residues 124–126, Gly286, 301–305, and Arg327; these read RAS and KPTAT.

This sequence belongs to the chorismate synthase family. Homotetramer. FMNH2 serves as cofactor.

It catalyses the reaction 5-O-(1-carboxyvinyl)-3-phosphoshikimate = chorismate + phosphate. The protein operates within metabolic intermediate biosynthesis; chorismate biosynthesis; chorismate from D-erythrose 4-phosphate and phosphoenolpyruvate: step 7/7. Its function is as follows. Catalyzes the anti-1,4-elimination of the C-3 phosphate and the C-6 proR hydrogen from 5-enolpyruvylshikimate-3-phosphate (EPSP) to yield chorismate, which is the branch point compound that serves as the starting substrate for the three terminal pathways of aromatic amino acid biosynthesis. This reaction introduces a second double bond into the aromatic ring system. In Synechococcus sp. (strain RCC307), this protein is Chorismate synthase.